The sequence spans 188 residues: Cytochrome c-type protein NrfB (188 aa).

The N-terminal stretch at 1–32 (MSVLRSLLTAGVLASGLLWSLNGITATPAAQA) is a signal peptide. Heme is bound by residues C49, C52, H53, C78, C81, H82, C113, C116, H117, C138, C141, H142, C163, C166, and H167.

Binds 5 heme groups per subunit.

It is found in the periplasm. It functions in the pathway energy metabolism; nitrogen metabolism. Its function is as follows. Plays a role in nitrite reduction. This chain is Cytochrome c-type protein NrfB (nrfB), found in Escherichia coli O6:H1 (strain CFT073 / ATCC 700928 / UPEC).